A 297-amino-acid chain; its full sequence is ClpXP adapter protein SpxH (297 aa).

Belongs to the SpxH family. Interacts with Spx.

It localises to the cytoplasm. Functionally, adapter protein required for efficient degradation of Spx by ClpXP under non-stress conditions. Interaction with Spx stabilizes Spx and exposes the C-terminus of Spx for recognition and proteolysis by ClpXP. This is ClpXP adapter protein SpxH from Bacillus cereus (strain ATCC 10987 / NRS 248).